The sequence spans 114 residues: Superoxide dismutase [Cu-Zn] (114 aa).

Cu cation-binding residues include His37, His39, and His54. Positions 48–76 are disordered; sequence CMSSGPHFNPRSKEHGAPTDENRHLGDLG. Zn(2+) contacts are provided by His54, His62, His71, and Asp74. Basic and acidic residues predominate over residues 58 to 73; that stretch reads RSKEHGAPTDENRHLG. His111 is a binding site for Cu cation.

The protein belongs to the Cu-Zn superoxide dismutase family. Homodimer. Requires Cu cation as cofactor. It depends on Zn(2+) as a cofactor.

It localises to the cytoplasm. The catalysed reaction is 2 superoxide + 2 H(+) = H2O2 + O2. In terms of biological role, destroys radicals which are normally produced within the cells and which are toxic to biological systems. In Drosophila obscura (Fruit fly), this protein is Superoxide dismutase [Cu-Zn].